The chain runs to 234 residues: Segregation and condensation protein A (234 aa).

The protein belongs to the ScpA family. In terms of assembly, component of a cohesin-like complex composed of ScpA, ScpB and the Smc homodimer, in which ScpA and ScpB bind to the head domain of Smc. The presence of the three proteins is required for the association of the complex with DNA.

It is found in the cytoplasm. Participates in chromosomal partition during cell division. May act via the formation of a condensin-like complex containing Smc and ScpB that pull DNA away from mid-cell into both cell halves. This Streptococcus pyogenes serotype M18 (strain MGAS8232) protein is Segregation and condensation protein A.